Reading from the N-terminus, the 284-residue chain is Bifunctional protein FolD (284 aa).

NADP(+) contacts are provided by residues 165–167, S190, and I231; that span reads GAS.

The protein belongs to the tetrahydrofolate dehydrogenase/cyclohydrolase family. As to quaternary structure, homodimer.

The enzyme catalyses (6R)-5,10-methylene-5,6,7,8-tetrahydrofolate + NADP(+) = (6R)-5,10-methenyltetrahydrofolate + NADPH. The catalysed reaction is (6R)-5,10-methenyltetrahydrofolate + H2O = (6R)-10-formyltetrahydrofolate + H(+). The protein operates within one-carbon metabolism; tetrahydrofolate interconversion. Catalyzes the oxidation of 5,10-methylenetetrahydrofolate to 5,10-methenyltetrahydrofolate and then the hydrolysis of 5,10-methenyltetrahydrofolate to 10-formyltetrahydrofolate. The sequence is that of Bifunctional protein FolD from Bordetella avium (strain 197N).